The chain runs to 209 residues: Large ribosomal subunit protein uL3 (209 aa).

A disordered region spans residues 127–147 (YSRGPMGHGSKSHRVAGARSA).

This sequence belongs to the universal ribosomal protein uL3 family. Part of the 50S ribosomal subunit. Forms a cluster with proteins L14 and L19.

One of the primary rRNA binding proteins, it binds directly near the 3'-end of the 23S rRNA, where it nucleates assembly of the 50S subunit. The polypeptide is Large ribosomal subunit protein uL3 (Finegoldia magna (strain ATCC 29328 / DSM 20472 / WAL 2508) (Peptostreptococcus magnus)).